The sequence spans 241 residues: Adenosylcobinamide-GDP ribazoletransferase (241 aa).

The next 7 helical transmembrane spans lie at 34 to 54 (RIPA…FTGS), 55 to 75 (FLSL…GFYL), 109 to 129 (VGPF…ELIT), 133 to 153 (PVAF…VLVF), 165 to 185 (MLFP…LPLL), 186 to 206 (LIDV…GFLI), and 221 to 241 (VLGG…NYLI).

Belongs to the CobS family. Requires Mg(2+) as cofactor.

Its subcellular location is the cell inner membrane. It carries out the reaction alpha-ribazole + adenosylcob(III)inamide-GDP = adenosylcob(III)alamin + GMP + H(+). It catalyses the reaction alpha-ribazole 5'-phosphate + adenosylcob(III)inamide-GDP = adenosylcob(III)alamin 5'-phosphate + GMP + H(+). It functions in the pathway cofactor biosynthesis; adenosylcobalamin biosynthesis; adenosylcobalamin from cob(II)yrinate a,c-diamide: step 7/7. Functionally, joins adenosylcobinamide-GDP and alpha-ribazole to generate adenosylcobalamin (Ado-cobalamin). Also synthesizes adenosylcobalamin 5'-phosphate from adenosylcobinamide-GDP and alpha-ribazole 5'-phosphate. The chain is Adenosylcobinamide-GDP ribazoletransferase from Fervidobacterium nodosum (strain ATCC 35602 / DSM 5306 / Rt17-B1).